The following is a 239-amino-acid chain: Uridylate kinase (239 aa).

Position 10–13 (10–13 (KFSG)) interacts with ATP. Residues 18–23 (GENGFG) are involved in allosteric activation by GTP. Residue glycine 52 coordinates UMP. Glycine 53 and arginine 57 together coordinate ATP. Residues aspartate 73 and 134–141 (TGNPYFTT) contribute to the UMP site. ATP-binding residues include threonine 161, tyrosine 167, and aspartate 170.

The protein belongs to the UMP kinase family. As to quaternary structure, homohexamer.

It localises to the cytoplasm. It carries out the reaction UMP + ATP = UDP + ADP. It participates in pyrimidine metabolism; CTP biosynthesis via de novo pathway; UDP from UMP (UMPK route): step 1/1. Allosterically activated by GTP. Inhibited by UTP. Catalyzes the reversible phosphorylation of UMP to UDP. The polypeptide is Uridylate kinase (Campylobacter jejuni subsp. jejuni serotype O:6 (strain 81116 / NCTC 11828)).